The following is a 638-amino-acid chain: Threonine--tRNA ligase (638 aa).

In terms of domain architecture, TGS spans 1-63; the sequence is MVMIQIELPD…TESGRLEIIT (63 aa). The tract at residues 245 to 536 is catalytic; that stretch reads DHRRIGRELD…LIEHYAGNFP (292 aa). Zn(2+) is bound by residues cysteine 337, histidine 388, and histidine 513.

This sequence belongs to the class-II aminoacyl-tRNA synthetase family. In terms of assembly, homodimer. It depends on Zn(2+) as a cofactor.

It localises to the cytoplasm. The enzyme catalyses tRNA(Thr) + L-threonine + ATP = L-threonyl-tRNA(Thr) + AMP + diphosphate + H(+). Functionally, catalyzes the attachment of threonine to tRNA(Thr) in a two-step reaction: L-threonine is first activated by ATP to form Thr-AMP and then transferred to the acceptor end of tRNA(Thr). Also edits incorrectly charged L-seryl-tRNA(Thr). The protein is Threonine--tRNA ligase of Syntrophotalea carbinolica (strain DSM 2380 / NBRC 103641 / GraBd1) (Pelobacter carbinolicus).